A 118-amino-acid chain; its full sequence is Large ribosomal subunit protein bL20 (118 aa).

This sequence belongs to the bacterial ribosomal protein bL20 family.

Functionally, binds directly to 23S ribosomal RNA and is necessary for the in vitro assembly process of the 50S ribosomal subunit. It is not involved in the protein synthesizing functions of that subunit. This Aliarcobacter butzleri (strain RM4018) (Arcobacter butzleri) protein is Large ribosomal subunit protein bL20.